Consider the following 142-residue polypeptide: uncharacterized protein (142 aa).

The Peptidase C39 domain maps to 18–137 (QSSGYSCGPA…KIFTGNVLVV (120 aa)).

This is an uncharacterized protein from Methanothermobacter marburgensis (strain ATCC BAA-927 / DSM 2133 / JCM 14651 / NBRC 100331 / OCM 82 / Marburg) (Methanobacterium thermoautotrophicum).